A 517-amino-acid chain; its full sequence is Crotonobetaine/carnitine--CoA ligase (517 aa).

This sequence belongs to the ATP-dependent AMP-binding enzyme family.

The catalysed reaction is 4-(trimethylamino)butanoate + ATP + CoA = 4-(trimethylamino)butanoyl-CoA + AMP + diphosphate. It catalyses the reaction crotonobetaine + ATP + CoA = crotonobetainyl-CoA + AMP + diphosphate. It carries out the reaction (R)-carnitine + ATP + CoA = (R)-carnitinyl-CoA + AMP + diphosphate. It functions in the pathway amine and polyamine metabolism; carnitine metabolism. In terms of biological role, catalyzes the transfer of CoA to carnitine, generating the initial carnitinyl-CoA needed for the CaiB reaction cycle. Also has activity toward crotonobetaine and gamma-butyrobetaine. In Escherichia coli O9:H4 (strain HS), this protein is Crotonobetaine/carnitine--CoA ligase.